The following is a 231-amino-acid chain: Class A basic helix-loop-helix protein 9 (231 aa).

The bHLH domain maps to 61 to 113 (ARRMAANVRERKRILDYNEAFNALRRALQHDLGGKRLSKIATLRRAIHRITAL). Positions 135 to 168 (QAAQGSSTGNSSFSVPRSAPSPIAPSLTRRDIAS) are disordered. Residues 137–149 (AQGSSTGNSSFSV) are compositionally biased toward polar residues.

As to quaternary structure, heterodimer. Efficient DNA binding requires dimerization with another bHLH protein. Interacts with TCF3, TCF4, and TCF12.

It is found in the nucleus. Transcription factor, which play a role in limb development. Is an essential player in the regulatory network governing transcription of genes implicated in limb morphogenesis. This is Class A basic helix-loop-helix protein 9 (Bhlha9) from Mus musculus (Mouse).